Here is a 476-residue protein sequence, read N- to C-terminus: Aspartyl/glutamyl-tRNA(Asn/Gln) amidotransferase subunit B (476 aa).

The protein belongs to the GatB/GatE family. GatB subfamily. In terms of assembly, heterotrimer of A, B and C subunits.

The enzyme catalyses L-glutamyl-tRNA(Gln) + L-glutamine + ATP + H2O = L-glutaminyl-tRNA(Gln) + L-glutamate + ADP + phosphate + H(+). The catalysed reaction is L-aspartyl-tRNA(Asn) + L-glutamine + ATP + H2O = L-asparaginyl-tRNA(Asn) + L-glutamate + ADP + phosphate + 2 H(+). Functionally, allows the formation of correctly charged Asn-tRNA(Asn) or Gln-tRNA(Gln) through the transamidation of misacylated Asp-tRNA(Asn) or Glu-tRNA(Gln) in organisms which lack either or both of asparaginyl-tRNA or glutaminyl-tRNA synthetases. The reaction takes place in the presence of glutamine and ATP through an activated phospho-Asp-tRNA(Asn) or phospho-Glu-tRNA(Gln). This Clostridium botulinum (strain ATCC 19397 / Type A) protein is Aspartyl/glutamyl-tRNA(Asn/Gln) amidotransferase subunit B.